A 362-amino-acid polypeptide reads, in one-letter code: MHFLQNAVVAATMGAALAAAAPLEKRSCTFTSASAAKSGKSSCSTITLDNIAVPAGETLDLTGLKKGTTVIFEGETTFGYKEWKGPLISMSGTDITVKQASGAKINCDGARWWDGKGSNGGKTKPKFFQAHKLDQSSITGLKVYNTPVQGFSILADHLTITDVTIDNSAGTSKGHNTDAFDIGQSTYITIDGATVYNQDDCLAINSGEHITFTNGYCDGGHGLSIGSIGGRSDNTVNDVTISNSKVLNSQNGVRIKTIYGKTGTVENVKFEDITLSDISKYGIVVEQDYENGSPTGTPTNGVKVEDITFKKVTGSVKSSGTDIYILCGSGSCSNWTWSGVDVTGGKKSSKCKNVPSGASCSD.

A signal peptide spans 1–20 (MHFLQNAVVAATMGAALAAA). A propeptide spanning residues 21–25 (APLEK) is cleaved from the precursor. The cysteines at positions 28 and 43 are disulfide-linked. 6 PbH1 repeats span residues 155 to 184 (ADHLTITDVTIDNSAGTSKGHNTDAFDIGQ), 185 to 206 (STYITIDGATVYNQDDCLAINS), 207 to 227 (GEHITFTNGYCDGGHGLSIGS), 236 to 257 (VNDVTISNSKVLNSQNGVRIKT), 265 to 287 (VENVKFEDITLSDISKYGIVVEQ), and 299 to 344 (TNGV…DVTG). The active-site Proton donor is aspartate 199. A disulfide bond links cysteine 201 and cysteine 217. Residue histidine 221 is part of the active site. Residues cysteine 327 and cysteine 332 are joined by a disulfide bond. Asparagine 334 carries an N-linked (GlcNAc...) asparagine glycan. An intrachain disulfide couples cysteine 351 to cysteine 360.

It belongs to the glycosyl hydrolase 28 family.

The protein localises to the secreted. It catalyses the reaction (1,4-alpha-D-galacturonosyl)n+m + H2O = (1,4-alpha-D-galacturonosyl)n + (1,4-alpha-D-galacturonosyl)m.. Functionally, involved in maceration and soft-rotting of plant tissue. Hydrolyzes the 1,4-alpha glycosidic bonds of de-esterified pectate in the smooth region of the plant cell wall. This is Probable endopolygalacturonase B (pgaB) from Aspergillus niger (strain ATCC MYA-4892 / CBS 513.88 / FGSC A1513).